The sequence spans 473 residues: MAVKTYNAGVKDYRNTYWEPDYSVKDTDILAVFKITPQAGVDREEAPAAVAAESSTGTWTTVWTDLLTDLDYYKGRAYRIEDVPGDDTCFYAFIAYPIDLFEEGSVVNVFTSLVGNVFGFKAVRALRLEDVRFPIAYVKTCGGPPHGIQVERDIMNKYGRPLLGCTIKPKLGLSAKNYGRACYEGLRGGLDFTKDDENVNSQPFMRWRQRFDFVMEAIQKAEAETGERKGHYLNVTAPTPEEMYKRAEYAKEIGAPIIMHDYITGGFCANTGLANWCRDNGMLLHIHRAMHRVLDRNPHHGIHFRVLTKILRLSGGDHLHSGTVVGKLEGDREATLGWIDIMRDRFIKEDRSRGIFFDQDWGSMPGVMPVASGGIHVWHMPALVTIFGDDSVLQFGGGTLGHPWGNAKGAAANRVALEACVEARNRGVAIEKEGKAVLTEAAKHSPELKIAMETWKEIKSEFDTVDKLDVAHK.

Residues asparagine 116 and threonine 166 each contribute to the substrate site. Catalysis depends on lysine 168, which acts as the Proton acceptor. Lysine 170 contacts substrate. Residues lysine 194, aspartate 196, and glutamate 197 each coordinate Mg(2+). Lysine 194 carries the post-translational modification N6-carboxylysine. The Proton acceptor role is filled by histidine 287. Substrate contacts are provided by arginine 288, histidine 320, and serine 372.

Belongs to the RuBisCO large chain family. Type I subfamily. In terms of assembly, heterohexadecamer of 8 large chains and 8 small chains. Mg(2+) is required as a cofactor.

The enzyme catalyses 2 (2R)-3-phosphoglycerate + 2 H(+) = D-ribulose 1,5-bisphosphate + CO2 + H2O. It carries out the reaction D-ribulose 1,5-bisphosphate + O2 = 2-phosphoglycolate + (2R)-3-phosphoglycerate + 2 H(+). Functionally, ruBisCO catalyzes two reactions: the carboxylation of D-ribulose 1,5-bisphosphate, the primary event in carbon dioxide fixation, as well as the oxidative fragmentation of the pentose substrate. Both reactions occur simultaneously and in competition at the same active site. This is Ribulose bisphosphate carboxylase large chain 2 from Acidithiobacillus ferrooxidans (Thiobacillus ferrooxidans).